The sequence spans 205 residues: Syndecan 4-B (205 aa).

An N-terminal signal peptide occupies residues 1-17; the sequence is MNRLLLLLALVLSGVAA. Topologically, residues 18–162 are extracellular; sequence ESIRETETMD…FFQRTEVIVA (145 aa). Residues 26-113 form a disordered region; sequence MDPTSMLEYE…HDFDETKTGR (88 aa). 3 O-linked (Xyl...) (glycosaminoglycan) serine glycosylation sites follow: S37, S73, and S75. Residues 44 to 94 show a composition bias toward acidic residues; sequence VFVDEDDDDDYEDGVDYEIDSESDNDEDYSGSGDDDFDDEDNVEDEDEEET. Positions 102 to 113 are enriched in basic and acidic residues; sequence PEHDFDETKTGR. A helical membrane pass occupies residues 163-183; sequence IIAGTLVGLVVAVSFIVFLVI. Residues 184–205 are Cytoplasmic-facing; sequence RRNQNGDLVKKPIYKKTSTMEV.

This sequence belongs to the syndecan proteoglycan family. In terms of assembly, interacts with the Wnt receptor fzd7 and its signal transducer dvl2/dsh. O-glycosylated; contains both chondroitin sulfate and heparan sulfate. Ser-37, Ser-73 and Ser-75 can all be modified by either chondroitin sulfate or heparan sulfate, and the protein exists in forms that contain only chondroitin sulfate, only heparan sulfate and both chondroitin sulfate and heparan sulfate. Expressed in the animal hemisphere from the 4-cell to the blastula stage. During gastrulation, expressed in the involuting dorsal mesoderm and ectoderm. After involution, localized mainly to the anterior neuroectoderm. At later stages, expressed in the brain, branchial arches, pronephros, tailbud, and at low levels in the somites.

The protein localises to the membrane. Cell surface proteoglycan. Regulates non-canonical Wnt signaling, being necessary and sufficient for fibronectrin-mediated translocation of dvl2/dsh to the plasma membrane. Required for proper convergent extension movements during gastrulation, which shape the neural plate, and for subsequent neural tube closure. The chain is Syndecan 4-B (sdc4-b) from Xenopus laevis (African clawed frog).